Consider the following 598-residue polypeptide: UvrABC system protein C (598 aa).

A GIY-YIG domain is found at aspartate 14–isoleucine 91. One can recognise a UVR domain in the interval aspartate 196–methionine 231.

It belongs to the UvrC family. In terms of assembly, interacts with UvrB in an incision complex.

The protein localises to the cytoplasm. In terms of biological role, the UvrABC repair system catalyzes the recognition and processing of DNA lesions. UvrC both incises the 5' and 3' sides of the lesion. The N-terminal half is responsible for the 3' incision and the C-terminal half is responsible for the 5' incision. The chain is UvrABC system protein C from Streptococcus pyogenes serotype M1.